Here is a 132-residue protein sequence, read N- to C-terminus: Flagellar assembly factor FliW (132 aa).

This sequence belongs to the FliW family. In terms of assembly, interacts with translational regulator CsrA and flagellin(s).

The protein localises to the cytoplasm. In terms of biological role, acts as an anti-CsrA protein, binds CsrA and prevents it from repressing translation of its target genes, one of which is flagellin. Binds to flagellin and participates in the assembly of the flagellum. This is Flagellar assembly factor FliW from Borreliella afzelii (strain PKo) (Borrelia afzelii).